Consider the following 1070-residue polypeptide: DNA-directed RNA polymerase subunit beta (1070 aa).

It belongs to the RNA polymerase beta chain family. In plastids the minimal PEP RNA polymerase catalytic core is composed of four subunits: alpha, beta, beta', and beta''. When a (nuclear-encoded) sigma factor is associated with the core the holoenzyme is formed, which can initiate transcription.

The protein localises to the plastid. Its subcellular location is the chloroplast. The enzyme catalyses RNA(n) + a ribonucleoside 5'-triphosphate = RNA(n+1) + diphosphate. In terms of biological role, DNA-dependent RNA polymerase catalyzes the transcription of DNA into RNA using the four ribonucleoside triphosphates as substrates. This chain is DNA-directed RNA polymerase subunit beta, found in Piper cenocladum (Ant piper).